Here is a 184-residue protein sequence, read N- to C-terminus: MALPVSLLMALVVLSCHSSCSLGCDLPHTHSLGNTRVLMLLGQMRRISPFSCLKDRNDFGFPQEVFDGNQFRKPQAISAVHETIQQIFHLFSTDGSSAAWDESLLDKLYTGLYQQLTELEACLSQEVGVEETPLMNEDSLLAVRRYFQRIALYLQEKKYSPCAWEIVRAEIMRSFSSSTNLPQS.

The N-terminal stretch at 1–23 (MALPVSLLMALVVLSCHSSCSLG) is a signal peptide. Intrachain disulfides connect C24–C122 and C52–C162.

It belongs to the alpha/beta interferon family.

Its subcellular location is the secreted. Functionally, produced by macrophages, IFN-alpha have antiviral activities. Interferon stimulates the production of two enzymes: a protein kinase and an oligoadenylate synthetase. This chain is Interferon alpha-3, found in Equus caballus (Horse).